We begin with the raw amino-acid sequence, 223 residues long: Thymidylate kinase (223 aa).

ATP is bound at residue 7 to 14 (GIDGAGKS).

Belongs to the thymidylate kinase family.

The enzyme catalyses dTMP + ATP = dTDP + ADP. Its function is as follows. Phosphorylation of dTMP to form dTDP in both de novo and salvage pathways of dTTP synthesis. The chain is Thymidylate kinase from Prosthecochloris aestuarii (strain DSM 271 / SK 413).